Here is a 68-residue protein sequence, read N- to C-terminus: Putative membrane protein insertion efficiency factor (68 aa).

This sequence belongs to the UPF0161 family.

It is found in the cell inner membrane. In terms of biological role, could be involved in insertion of integral membrane proteins into the membrane. The polypeptide is Putative membrane protein insertion efficiency factor (Persephonella marina (strain DSM 14350 / EX-H1)).